The primary structure comprises 179 residues: ATP-dependent protease subunit HslV (179 aa).

Residue Thr7 is part of the active site. Na(+)-binding residues include Ala162, Cys165, and Thr168.

It belongs to the peptidase T1B family. HslV subfamily. A double ring-shaped homohexamer of HslV is capped on each side by a ring-shaped HslU homohexamer. The assembly of the HslU/HslV complex is dependent on binding of ATP.

Its subcellular location is the cytoplasm. It carries out the reaction ATP-dependent cleavage of peptide bonds with broad specificity.. With respect to regulation, allosterically activated by HslU binding. Its function is as follows. Protease subunit of a proteasome-like degradation complex believed to be a general protein degrading machinery. In Nitrosococcus oceani (strain ATCC 19707 / BCRC 17464 / JCM 30415 / NCIMB 11848 / C-107), this protein is ATP-dependent protease subunit HslV.